The chain runs to 264 residues: Acetylglutamate kinase (264 aa).

Substrate contacts are provided by residues 50–51 (GG), arginine 72, and asparagine 164.

Belongs to the acetylglutamate kinase family. ArgB subfamily.

It is found in the cytoplasm. The catalysed reaction is N-acetyl-L-glutamate + ATP = N-acetyl-L-glutamyl 5-phosphate + ADP. The protein operates within amino-acid biosynthesis; L-arginine biosynthesis; N(2)-acetyl-L-ornithine from L-glutamate: step 2/4. Functionally, catalyzes the ATP-dependent phosphorylation of N-acetyl-L-glutamate. This chain is Acetylglutamate kinase, found in Moritella profunda.